A 591-amino-acid chain; its full sequence is ATP-dependent lipid A-core flippase (591 aa).

A run of 5 helical transmembrane segments spans residues 34 to 54 (LILA…LAVI), 71 to 91 (IWSV…CNFF), 158 to 178 (LVVI…TVII), 258 to 278 (LTPL…AVAL), and 285 to 305 (TLTA…FDPI). Residues 35–317 (ILAVLLMAGA…LTNLASKMQK (283 aa)) form the ABC transmembrane type-1 domain. The ABC transporter domain maps to 350-586 (IEFRQIGHRF…GGLYATLYNM (237 aa)). 384–391 (GRSGSGKT) serves as a coordination point for ATP.

This sequence belongs to the ABC transporter superfamily. Lipid exporter (TC 3.A.1.106) family. Homodimer.

It localises to the cell inner membrane. It catalyses the reaction ATP + H2O + lipid A-core oligosaccharideSide 1 = ADP + phosphate + lipid A-core oligosaccharideSide 2.. Functionally, involved in lipopolysaccharide (LPS) biosynthesis. Translocates lipid A-core from the inner to the outer leaflet of the inner membrane. Transmembrane domains (TMD) form a pore in the inner membrane and the ATP-binding domain (NBD) is responsible for energy generation. This is ATP-dependent lipid A-core flippase from Bordetella avium (strain 197N).